A 345-amino-acid polypeptide reads, in one-letter code: KRR1 small subunit processome component homolog (345 aa).

The KH domain maps to 125 to 193; sequence DIIKIGNLVH…VRDIVLETMN (69 aa). Residues 232–245 show a composition bias toward basic residues; the sequence is NISKRKQPKVKKQK. Disordered regions lie at residues 232–260 and 273–345; these read NISKRKQPKVKKQKKEYTPFPPSQPESKV and QEQK…ARSS. Residues 270 to 298 are a coiled coil; it reads FLNQEQKQAKRNQERTEKQKEAAKRQDER. Basic and acidic residues-rich tracts occupy residues 276–302 and 315–330; these read KQAKRNQERTEKQKEAAKRQDERRNKD and RKKEDGSSSSKVDVKA. The segment covering 331 to 345 has biased composition (basic residues); sequence LKAKLIKANKKARSS.

It belongs to the KRR1 family. As to quaternary structure, monomer. Component of the ribosomal small subunit (SSU) processome.

It is found in the nucleus. Its subcellular location is the nucleolus. Its function is as follows. Required for 40S ribosome biogenesis. Involved in nucleolar processing of pre-18S ribosomal RNA and ribosome assembly. Binds to RNA. Required for female germline development, cell viability during eye development and for survival of dividing cells and epithelial cells during early wing disk development. This Drosophila melanogaster (Fruit fly) protein is KRR1 small subunit processome component homolog (dbe).